The sequence spans 578 residues: Arginine--tRNA ligase (578 aa).

The 'HIGH' region motif lies at Pro-125–His-135.

The protein belongs to the class-I aminoacyl-tRNA synthetase family. In terms of assembly, monomer.

It is found in the cytoplasm. It carries out the reaction tRNA(Arg) + L-arginine + ATP = L-arginyl-tRNA(Arg) + AMP + diphosphate. This chain is Arginine--tRNA ligase, found in Buchnera aphidicola subsp. Baizongia pistaciae (strain Bp).